The chain runs to 84 residues: U2-theraphotoxin-Cg1b 1 (84 aa).

Positions 1–21 are cleaved as a signal peptide; the sequence is MKVSVLITLAVWGVMFLLTSA. Positions 22-48 are excised as a propeptide; the sequence is QERGSDQMDSPAWLKSMERIFQSEERE. 3 cysteine pairs are disulfide-bonded: Cys49-Cys63, Cys56-Cys68, and Cys62-Cys76.

Belongs to the neurotoxin 10 (Hwtx-1) family. 06 (F4b) subfamily. In terms of tissue distribution, expressed by the venom gland.

It localises to the secreted. Functionally, probable ion channel inhibitor. The chain is U2-theraphotoxin-Cg1b 1 from Chilobrachys guangxiensis (Chinese earth tiger tarantula).